The primary structure comprises 188 residues: Phosphatidylinositol N-acetylglucosaminyltransferase subunit H (188 aa).

Belongs to the PIGH family. Component of the glycosylphosphatidylinositol-N-acetylglucosaminyltransferase (GPI-GnT) complex composed at least by PIGA, PIGC, PIGH, PIGP, PIGQ, PIGY and DPM2. Interacts with PIGQ.

The protein localises to the cytoplasm. It participates in glycolipid biosynthesis; glycosylphosphatidylinositol-anchor biosynthesis. Its function is as follows. Part of the glycosylphosphatidylinositol-N-acetylglucosaminyltransferase (GPI-GnT) complex that catalyzes the transfer of N-acetylglucosamine from UDP-N-acetylglucosamine to phosphatidylinositol and participates in the first step of GPI biosynthesis. In Bos taurus (Bovine), this protein is Phosphatidylinositol N-acetylglucosaminyltransferase subunit H.